The sequence spans 264 residues: Phosphatidylglycerol--prolipoprotein diacylglyceryl transferase (264 aa).

Helical transmembrane passes span 14-34, 60-80, 98-118, 128-148, 176-196, 203-223, and 240-260; these read IIFS…LIGF, LIYT…VFFY, GGMS…WVSF, ADFI…GNFI, SQLY…NWFI, GSVA…VEYV, and GQLL…WAYS. A 1,2-diacyl-sn-glycero-3-phospho-(1'-sn-glycerol) is bound at residue R143.

This sequence belongs to the Lgt family.

The protein resides in the cell inner membrane. The catalysed reaction is L-cysteinyl-[prolipoprotein] + a 1,2-diacyl-sn-glycero-3-phospho-(1'-sn-glycerol) = an S-1,2-diacyl-sn-glyceryl-L-cysteinyl-[prolipoprotein] + sn-glycerol 1-phosphate + H(+). It functions in the pathway protein modification; lipoprotein biosynthesis (diacylglyceryl transfer). Functionally, catalyzes the transfer of the diacylglyceryl group from phosphatidylglycerol to the sulfhydryl group of the N-terminal cysteine of a prolipoprotein, the first step in the formation of mature lipoproteins. The protein is Phosphatidylglycerol--prolipoprotein diacylglyceryl transferase of Actinobacillus pleuropneumoniae serotype 7 (strain AP76).